Reading from the N-terminus, the 831-residue chain is Periplasmic nitrate reductase (831 aa).

Positions 1 to 29 (MTVTRRDFVRHQALATAAAAAGVAVPAAA) form a signal peptide, tat-type signal. Residues 41 to 97 (LVWSKAPCRFCGTGCSVNVATKEGRVVATHGDIKSPVNRGLNCVKGYFLSKVMYGED) enclose the 4Fe-4S Mo/W bis-MGD-type domain. The [4Fe-4S] cluster site is built by cysteine 48, cysteine 51, cysteine 55, and cysteine 83. Mo-bis(molybdopterin guanine dinucleotide) contacts are provided by residues lysine 85, glutamine 152, asparagine 177, cysteine 181, 214–221 (WGSNMAEM), 245–249 (STYEH), 264–266 (QSD), methionine 375, glutamine 379, asparagine 485, 511–512 (SD), lysine 534, aspartate 561, and 721–730 (TGRVIEHWHS). Tryptophan 797 contributes to the substrate binding site. Positions 805 and 822 each coordinate Mo-bis(molybdopterin guanine dinucleotide).

Belongs to the prokaryotic molybdopterin-containing oxidoreductase family. NasA/NapA/NarB subfamily. Component of the periplasmic nitrate reductase NapAB complex composed of NapA and NapB. [4Fe-4S] cluster is required as a cofactor. The cofactor is Mo-bis(molybdopterin guanine dinucleotide). Post-translationally, predicted to be exported by the Tat system. The position of the signal peptide cleavage has not been experimentally proven.

It localises to the periplasm. It carries out the reaction 2 Fe(II)-[cytochrome] + nitrate + 2 H(+) = 2 Fe(III)-[cytochrome] + nitrite + H2O. Its function is as follows. Catalytic subunit of the periplasmic nitrate reductase complex NapAB. Receives electrons from NapB and catalyzes the reduction of nitrate to nitrite. In Saccharophagus degradans (strain 2-40 / ATCC 43961 / DSM 17024), this protein is Periplasmic nitrate reductase.